The following is a 404-amino-acid chain: Cysteine desulfurase IscS (404 aa).

Pyridoxal 5'-phosphate is bound by residues 75–76 (AT), Asn155, Gln183, and 203–205 (SGH). Lys206 is subject to N6-(pyridoxal phosphate)lysine. Pyridoxal 5'-phosphate is bound at residue Thr243. Cys328 functions as the Cysteine persulfide intermediate in the catalytic mechanism. Residue Cys328 participates in [2Fe-2S] cluster binding.

The protein belongs to the class-V pyridoxal-phosphate-dependent aminotransferase family. NifS/IscS subfamily. Homodimer. Forms a heterotetramer with IscU, interacts with other sulfur acceptors. Pyridoxal 5'-phosphate serves as cofactor.

It is found in the cytoplasm. The catalysed reaction is (sulfur carrier)-H + L-cysteine = (sulfur carrier)-SH + L-alanine. The protein operates within cofactor biosynthesis; iron-sulfur cluster biosynthesis. Functionally, master enzyme that delivers sulfur to a number of partners involved in Fe-S cluster assembly, tRNA modification or cofactor biosynthesis. Catalyzes the removal of elemental sulfur and selenium atoms from cysteine and selenocysteine to produce alanine. Functions as a sulfur delivery protein for Fe-S cluster synthesis onto IscU, an Fe-S scaffold assembly protein, as well as other S acceptor proteins. Also functions as a selenium delivery protein in the pathway for the biosynthesis of selenophosphate. The sequence is that of Cysteine desulfurase IscS from Escherichia coli (strain K12 / DH10B).